A 479-amino-acid chain; its full sequence is Ribosomal lysine N-methyltransferase 2 (479 aa).

The SET domain maps to 22–325; the sequence is PNISICESPE…INEELFLNYG (304 aa). Tyr324 is an S-adenosyl-L-methionine binding site.

The protein belongs to the class V-like SAM-binding methyltransferase superfamily. RKM2 family.

S-adenosyl-L-methionine-dependent protein-lysine N-methyltransferase that trimethylates 60S ribosomal protein L12 (RPL12A and RPL12B) at 'Lys-4' and 'Lys-11'. In Saccharomyces cerevisiae (strain ATCC 204508 / S288c) (Baker's yeast), this protein is Ribosomal lysine N-methyltransferase 2.